Reading from the N-terminus, the 122-residue chain is Small ribosomal subunit protein uS13 (122 aa).

Residues 99-122 are disordered; that stretch reads RGQRTHTNARTRKGPAKAIAGKKK.

Belongs to the universal ribosomal protein uS13 family. As to quaternary structure, part of the 30S ribosomal subunit. Forms a loose heterodimer with protein S19. Forms two bridges to the 50S subunit in the 70S ribosome.

Its function is as follows. Located at the top of the head of the 30S subunit, it contacts several helices of the 16S rRNA. In the 70S ribosome it contacts the 23S rRNA (bridge B1a) and protein L5 of the 50S subunit (bridge B1b), connecting the 2 subunits; these bridges are implicated in subunit movement. Contacts the tRNAs in the A and P-sites. The protein is Small ribosomal subunit protein uS13 of Parvibaculum lavamentivorans (strain DS-1 / DSM 13023 / NCIMB 13966).